Reading from the N-terminus, the 317-residue chain is tRNA pseudouridine synthase B (317 aa).

The Nucleophile role is filled by Asp47.

It belongs to the pseudouridine synthase TruB family. Type 1 subfamily.

It carries out the reaction uridine(55) in tRNA = pseudouridine(55) in tRNA. In terms of biological role, responsible for synthesis of pseudouridine from uracil-55 in the psi GC loop of transfer RNAs. The polypeptide is tRNA pseudouridine synthase B (Shewanella sp. (strain ANA-3)).